Here is a 1362-residue protein sequence, read N- to C-terminus: DNA-directed RNA polymerase subunit beta (1362 aa).

The protein belongs to the RNA polymerase beta chain family. As to quaternary structure, the RNAP catalytic core consists of 2 alpha, 1 beta, 1 beta' and 1 omega subunit. When a sigma factor is associated with the core the holoenzyme is formed, which can initiate transcription.

It carries out the reaction RNA(n) + a ribonucleoside 5'-triphosphate = RNA(n+1) + diphosphate. Its function is as follows. DNA-dependent RNA polymerase catalyzes the transcription of DNA into RNA using the four ribonucleoside triphosphates as substrates. This Acinetobacter baumannii (strain AB307-0294) protein is DNA-directed RNA polymerase subunit beta.